Here is a 432-residue protein sequence, read N- to C-terminus: Histidinol dehydrogenase (432 aa).

Ser240, Gln262, and His265 together coordinate substrate. Residues Gln262 and His265 each coordinate Zn(2+). Residues Glu330 and His331 each act as proton acceptor in the active site. 4 residues coordinate substrate: His331, Asp364, Glu418, and His423. Asp364 lines the Zn(2+) pocket. His423 serves as a coordination point for Zn(2+).

The protein belongs to the histidinol dehydrogenase family. It depends on Zn(2+) as a cofactor.

The enzyme catalyses L-histidinol + 2 NAD(+) + H2O = L-histidine + 2 NADH + 3 H(+). It functions in the pathway amino-acid biosynthesis; L-histidine biosynthesis; L-histidine from 5-phospho-alpha-D-ribose 1-diphosphate: step 9/9. Catalyzes the sequential NAD-dependent oxidations of L-histidinol to L-histidinaldehyde and then to L-histidine. The chain is Histidinol dehydrogenase from Wolinella succinogenes (strain ATCC 29543 / DSM 1740 / CCUG 13145 / JCM 31913 / LMG 7466 / NCTC 11488 / FDC 602W) (Vibrio succinogenes).